Consider the following 163-residue polypeptide: Large ribosomal subunit protein eL24y (163 aa).

Over residues 119–133 (IKKTKDEKKAKKVEF) the composition is skewed to basic and acidic residues. The tract at residues 119–163 (IKKTKDEKKAKKVEFASKQQKVKANFPKAAAASKGPKVGGGGGKR) is disordered.

The protein belongs to the eukaryotic ribosomal protein eL24 family. Interacts with REIL1 and REIL2. Component of the large ribosomal subunit. Ubiquitous.

The protein localises to the cytoplasm. It is found in the nucleus. The protein resides in the nucleolus. Its subcellular location is the nucleoplasm. Its function is as follows. Might have an extraribosomal function in reinitiation of translation of ETTIN and MONOPTEROS genes that are involved in the auxin-mediated gynoecium patterning. Essential in leaf polarity establishment, probably having a role for translation in leaf dorsoventral patterning to specify leaf adaxial identity. This chain is Large ribosomal subunit protein eL24y, found in Arabidopsis thaliana (Mouse-ear cress).